The chain runs to 477 residues: UDP-N-acetylmuramate--L-alanine ligase (477 aa).

112–118 (GTHGKTT) provides a ligand contact to ATP.

The protein belongs to the MurCDEF family.

It is found in the cytoplasm. The enzyme catalyses UDP-N-acetyl-alpha-D-muramate + L-alanine + ATP = UDP-N-acetyl-alpha-D-muramoyl-L-alanine + ADP + phosphate + H(+). It functions in the pathway cell wall biogenesis; peptidoglycan biosynthesis. In terms of biological role, cell wall formation. The sequence is that of UDP-N-acetylmuramate--L-alanine ligase from Cupriavidus necator (strain ATCC 17699 / DSM 428 / KCTC 22496 / NCIMB 10442 / H16 / Stanier 337) (Ralstonia eutropha).